Here is a 444-residue protein sequence, read N- to C-terminus: 23S rRNA (uracil(1939)-C(5))-methyltransferase RlmD (444 aa).

One can recognise a TRAM domain in the interval lysine 5 to serine 64. Cysteine 77, cysteine 83, cysteine 86, and cysteine 166 together coordinate [4Fe-4S] cluster. Residues glutamine 276, phenylalanine 305, asparagine 310, glutamate 326, asparagine 353, and aspartate 374 each contribute to the S-adenosyl-L-methionine site. Residue cysteine 400 is the Nucleophile of the active site.

Belongs to the class I-like SAM-binding methyltransferase superfamily. RNA M5U methyltransferase family. RlmD subfamily.

It carries out the reaction uridine(1939) in 23S rRNA + S-adenosyl-L-methionine = 5-methyluridine(1939) in 23S rRNA + S-adenosyl-L-homocysteine + H(+). In terms of biological role, catalyzes the formation of 5-methyl-uridine at position 1939 (m5U1939) in 23S rRNA. This is 23S rRNA (uracil(1939)-C(5))-methyltransferase RlmD from Legionella pneumophila (strain Paris).